The following is a 495-amino-acid chain: Lysine--tRNA ligase (495 aa).

Residues E406 and E413 each contribute to the Mg(2+) site.

The protein belongs to the class-II aminoacyl-tRNA synthetase family. Homodimer. It depends on Mg(2+) as a cofactor.

Its subcellular location is the cytoplasm. The catalysed reaction is tRNA(Lys) + L-lysine + ATP = L-lysyl-tRNA(Lys) + AMP + diphosphate. The sequence is that of Lysine--tRNA ligase from Leptospira borgpetersenii serovar Hardjo-bovis (strain JB197).